The sequence spans 294 residues: MGDFGTVLTAMITPFKADGSVNYAVAAELAANLVDNGTDTLVVCGTTGESPTLSWDEEYNLFVEVLQTVAGKAKVIAGCGSNSTKEAIAATQKAAKIGVHGTLQVVPYYNKPPQAGLYQHFQAIAQACPELPLLLYNVPGRTGQNLSPETVVRLAEIDNIVGVKEASGNLDQAGEIRRLTPKEFQIYAGDDSLTLPLLAIGAKGVVSVASHLVGNQLQQMIQAFNSGQVTVASDIHLRLLPLFKTLFITTNPIPIKQALKLQGWEVGSTRPPLSDADAEVSQKLEAVMKHLDLI.

T47 provides a ligand contact to pyruvate. The active-site Proton donor/acceptor is the Y136. K164 (schiff-base intermediate with substrate) is an active-site residue. Pyruvate is bound at residue V206.

Belongs to the DapA family. Homotetramer; dimer of dimers.

It localises to the cytoplasm. It carries out the reaction L-aspartate 4-semialdehyde + pyruvate = (2S,4S)-4-hydroxy-2,3,4,5-tetrahydrodipicolinate + H2O + H(+). It functions in the pathway amino-acid biosynthesis; L-lysine biosynthesis via DAP pathway; (S)-tetrahydrodipicolinate from L-aspartate: step 3/4. Its function is as follows. Catalyzes the condensation of (S)-aspartate-beta-semialdehyde [(S)-ASA] and pyruvate to 4-hydroxy-tetrahydrodipicolinate (HTPA). This Nostoc sp. (strain PCC 7120 / SAG 25.82 / UTEX 2576) protein is 4-hydroxy-tetrahydrodipicolinate synthase.